We begin with the raw amino-acid sequence, 211 residues long: RILP-like protein 2 (211 aa).

The disordered stretch occupies residues M1 to S32. Positions E8 to D21 are enriched in acidic residues. Positions G24–Q106 constitute an RH1 domain. Residues R70–S164 adopt a coiled-coil conformation. Residue S107 is modified to Phosphoserine. One can recognise an RH2 domain in the interval R130–K201. Positions L166–G190 are disordered.

It belongs to the RILPL family. In terms of assembly, homodimer. Interacts with RAC1. Interacts (via N-terminus) with MYO5A, the interaction is required for its role in dendrite formation. Interacts with RAB8A; interaction is dependent on the phosphorylation of RAB8A on 'Thr-72'. Interacts with RAB10 and RAB12; interaction is dependent on the phosphorylation of 'Thr-73' on RAB10 and 'Ser-105' on RAB12. In terms of tissue distribution, widely expressed. Expressed at higher level in lung.

The protein localises to the cytoplasm. It localises to the cytosol. The protein resides in the cytoskeleton. Its subcellular location is the microtubule organizing center. It is found in the centrosome. The protein localises to the cell projection. It localises to the cilium. Functionally, involved in cell shape and neuronal morphogenesis, positively regulating the establishment and maintenance of dendritic spines. Plays a role in cellular protein transport, including protein transport away from primary cilia. May function via activation of RAC1 and PAK1. The polypeptide is RILP-like protein 2 (RILPL2) (Homo sapiens (Human)).